The following is a 304-amino-acid chain: Non-specific ribonucleoside hydrolase RihC (304 aa).

Residue His-233 is part of the active site.

The protein belongs to the IUNH family. RihC subfamily.

In terms of biological role, hydrolyzes both purine and pyrimidine ribonucleosides with a broad-substrate specificity. The sequence is that of Non-specific ribonucleoside hydrolase RihC from Shigella boydii serotype 18 (strain CDC 3083-94 / BS512).